We begin with the raw amino-acid sequence, 207 residues long: Holliday junction resolvase RecU (207 aa).

A disordered region spans residues 1 to 21 (MTIRYPNGQVYRQPGPTKSKS). Residues Thr87, Asp89, Glu102, and Gln121 each contribute to the Mg(2+) site.

This sequence belongs to the RecU family. Requires Mg(2+) as cofactor.

The protein resides in the cytoplasm. The enzyme catalyses Endonucleolytic cleavage at a junction such as a reciprocal single-stranded crossover between two homologous DNA duplexes (Holliday junction).. Its function is as follows. Endonuclease that resolves Holliday junction intermediates in genetic recombination. Cleaves mobile four-strand junctions by introducing symmetrical nicks in paired strands. Promotes annealing of linear ssDNA with homologous dsDNA. Required for DNA repair, homologous recombination and chromosome segregation. This is Holliday junction resolvase RecU from Lactiplantibacillus plantarum (strain ATCC BAA-793 / NCIMB 8826 / WCFS1) (Lactobacillus plantarum).